Reading from the N-terminus, the 138-residue chain is Translation initiation factor 2 subunit beta (138 aa).

This sequence belongs to the eIF-2-beta/eIF-5 family. Heterotrimer composed of an alpha, a beta and a gamma chain.

Its function is as follows. eIF-2 functions in the early steps of protein synthesis by forming a ternary complex with GTP and initiator tRNA. This is Translation initiation factor 2 subunit beta from Methanopyrus kandleri (strain AV19 / DSM 6324 / JCM 9639 / NBRC 100938).